The following is a 456-amino-acid chain: Exodeoxyribonuclease 7 large subunit (456 aa).

It belongs to the XseA family. In terms of assembly, heterooligomer composed of large and small subunits.

Its subcellular location is the cytoplasm. The catalysed reaction is Exonucleolytic cleavage in either 5'- to 3'- or 3'- to 5'-direction to yield nucleoside 5'-phosphates.. Functionally, bidirectionally degrades single-stranded DNA into large acid-insoluble oligonucleotides, which are then degraded further into small acid-soluble oligonucleotides. The chain is Exodeoxyribonuclease 7 large subunit from Shigella dysenteriae serotype 1 (strain Sd197).